The following is a 252-amino-acid chain: Transcriptional regulatory protein HptR (252 aa).

The Response regulatory domain occupies 3–118 (KVVICDDERI…QLEVILGRLV (116 aa)). Position 55 is a 4-aspartylphosphate (D55). In terms of domain architecture, HTH araC/xylS-type spans 153 to 250 (NQIVDQIKQS…QMAPSDYCKQ (98 aa)). DNA-binding regions (H-T-H motif) lie at residues 170–191 (SDLI…KDHV) and 217–240 (HYEI…KKYL).

Phosphorylated by HptS.

The protein resides in the cytoplasm. Member of the two-component regulatory system HptS/HptR that regulates genes involved in hexose phosphate transport system in response to changes in extracellular phosphate sources. Activates uhpT expression to facilitate glucose-6-phosphate/G6P utilization by directly binding to its promoter. Antagonizes CcpA-dependent transcription of a subset of CcpA-regulated genes involved in antibiotic susceptibility. In Staphylococcus aureus (strain bovine RF122 / ET3-1), this protein is Transcriptional regulatory protein HptR (hptR).